Reading from the N-terminus, the 846-residue chain is Aminopeptidase N (846 aa).

Residues E120 and 252–256 (GAMEN) each bind substrate. Position 288 (H288) interacts with Zn(2+). E289 serves as the catalytic Proton acceptor. Zn(2+) contacts are provided by H292 and E311.

Belongs to the peptidase M1 family. Monomer. The cofactor is Zn(2+).

It localises to the cytoplasm. It catalyses the reaction Release of an N-terminal amino acid, Xaa-|-Yaa- from a peptide, amide or arylamide. Xaa is preferably Ala, but may be most amino acids including Pro (slow action). When a terminal hydrophobic residue is followed by a prolyl residue, the two may be released as an intact Xaa-Pro dipeptide.. Aminopeptidase with broad substrate specificity to several peptides. It has more affinity for oligopeptides than for dipeptides. It plays an essential role in the metabolism, it may be involved in nitrogen supply or protein turnover. This is Aminopeptidase N (pepN) from Lactococcus lactis subsp. lactis (strain IL1403) (Streptococcus lactis).